A 183-amino-acid chain; its full sequence is ATP synthase subunit delta (183 aa).

Belongs to the ATPase delta chain family. F-type ATPases have 2 components, F(1) - the catalytic core - and F(0) - the membrane proton channel. F(1) has five subunits: alpha(3), beta(3), gamma(1), delta(1), epsilon(1). F(0) has three main subunits: a(1), b(2) and c(10-14). The alpha and beta chains form an alternating ring which encloses part of the gamma chain. F(1) is attached to F(0) by a central stalk formed by the gamma and epsilon chains, while a peripheral stalk is formed by the delta and b chains.

The protein localises to the cell inner membrane. In terms of biological role, f(1)F(0) ATP synthase produces ATP from ADP in the presence of a proton or sodium gradient. F-type ATPases consist of two structural domains, F(1) containing the extramembraneous catalytic core and F(0) containing the membrane proton channel, linked together by a central stalk and a peripheral stalk. During catalysis, ATP synthesis in the catalytic domain of F(1) is coupled via a rotary mechanism of the central stalk subunits to proton translocation. Functionally, this protein is part of the stalk that links CF(0) to CF(1). It either transmits conformational changes from CF(0) to CF(1) or is implicated in proton conduction. This is ATP synthase subunit delta from Oleidesulfovibrio alaskensis (strain ATCC BAA-1058 / DSM 17464 / G20) (Desulfovibrio alaskensis).